Consider the following 213-residue polypeptide: Protein GET1 (213 aa).

Residues 1–4 are Lumenal-facing; sequence MPSL. The chain crosses the membrane as a helical span at residues 5–24; it reads LLVVFILQFLLHIINTVGAS. Residues 25 to 110 lie on the Cytoplasmic side of the membrane; that stretch reads TVNDLLWILY…AFTSAVSTLR (86 aa). Residues 41–68 are a coiled coil; it reads TSSSAQKAQKLKKEIVQLKRELGATSAQ. A helical membrane pass occupies residues 111–131; the sequence is WLGTQGLRFVLQFWFAKSPMF. The Lumenal segment spans residues 132–155; it reads WMPAGWLPFYVEWILSFPRAPLGS. Residues 156-172 traverse the membrane as a helical segment; sequence VSINVWGIACASMIALA. Residues 173–213 lie on the Cytoplasmic side of the membrane; that stretch reads AEGLAAVWVLATKRPTPIATEKKEAMAFAADQKSSGEKKEL.

This sequence belongs to the WRB/GET1 family. In terms of assembly, interacts with GET3.

The protein localises to the endoplasmic reticulum membrane. Its function is as follows. Required for the post-translational delivery of tail-anchored (TA) proteins to the endoplasmic reticulum. Acts as a membrane receptor for soluble GET3, which recognizes and selectively binds the transmembrane domain of TA proteins in the cytosol. This Phaeosphaeria nodorum (strain SN15 / ATCC MYA-4574 / FGSC 10173) (Glume blotch fungus) protein is Protein GET1.